Consider the following 843-residue polypeptide: Taste receptor type 1 member 2 (843 aa).

The N-terminal stretch at 1-19 (MGPQARTLHLLFLLLHALP) is a signal peptide. Over 20-570 (KPVMLVGNSD…AFLEWHEVPT (551 aa)) the chain is Extracellular. N87, N296, N316, N355, N372, N432, N484, N491, and N531 each carry an N-linked (GlcNAc...) asparagine glycan. A helical transmembrane segment spans residues 571–591 (IVVTILAALGFISTLAILLIF). The Cytoplasmic segment spans residues 592 to 606 (WRHFQTPMVRSAGGP). Residues 607–627 (MCFLMLVPLLLAFGMVPVYVG) form a helical membrane-spanning segment. Residues 628-642 (PPTVFSCFCRQAFFT) are Extracellular-facing. A helical membrane pass occupies residues 643-663 (VCFSVCLSCITVRSFQIVCVF). Topologically, residues 664-682 (KMARRLPSAYGFWMRYHGP) are cytoplasmic. The chain crosses the membrane as a helical span at residues 683–703 (YVFVAFITAVKVALVAGNMLA). Over 704–731 (TTINPIGRTDPDDPNIIILSCHPNYRNG) the chain is Extracellular. Residues 732-752 (LLFNTSMDLLLSVLGFSFAYV) traverse the membrane as a helical segment. Topologically, residues 753 to 764 (GKELPTNYNEAK) are cytoplasmic. The chain crosses the membrane as a helical span at residues 765–785 (FITLSMTFSFTSSISLCTFMS). Residues 786–789 (VHDG) are Extracellular-facing. Residues 790–810 (VLVTIMDLLVTVLNFLAIGLG) form a helical membrane-spanning segment. The Cytoplasmic portion of the chain corresponds to 811–843 (YFGPKCYMILFYPERNTSAYFNSMIQGYTMRKS).

The protein belongs to the G-protein coupled receptor 3 family. TAS1R subfamily. In terms of assembly, forms heterodimers with TAS1R3. As to expression, expressed mainly in circumvallate and foliate taste papillae.

Its subcellular location is the cell membrane. In terms of biological role, putative taste receptor. TAS1R2/TAS1R3 recognizes diverse natural and synthetic sweeteners. This is Taste receptor type 1 member 2 (Tas1r2) from Mus musculus (Mouse).